The sequence spans 256 residues: UPF0246 protein Sbal_1048 (256 aa).

The protein belongs to the UPF0246 family.

The chain is UPF0246 protein Sbal_1048 from Shewanella baltica (strain OS155 / ATCC BAA-1091).